The primary structure comprises 158 residues: uncharacterized protein (158 aa).

Residues 1–30 (MNKKFLKCGTLFLISCSILGSTIPAVTVFS) form the signal peptide.

This is an uncharacterized protein from Streptococcus pneumoniae serotype 2 (strain D39 / NCTC 7466).